The sequence spans 160 residues: Transcription elongation factor GreA (160 aa).

Positions 4–70 (QKQYPMTQEG…IEQDIQRIEH (67 aa)) form a coiled coil.

It belongs to the GreA/GreB family.

Its function is as follows. Necessary for efficient RNA polymerase transcription elongation past template-encoded arresting sites. The arresting sites in DNA have the property of trapping a certain fraction of elongating RNA polymerases that pass through, resulting in locked ternary complexes. Cleavage of the nascent transcript by cleavage factors such as GreA or GreB allows the resumption of elongation from the new 3'terminus. GreA releases sequences of 2 to 3 nucleotides. The sequence is that of Transcription elongation factor GreA from Staphylococcus carnosus (strain TM300).